The following is a 383-amino-acid chain: UDP-N-acetylenolpyruvoylglucosamine reductase (383 aa).

The FAD-binding PCMH-type domain maps to leucine 42–aspartate 212. Residue arginine 189 is part of the active site. The active-site Proton donor is serine 267. Glutamate 369 is a catalytic residue.

It belongs to the MurB family. FAD serves as cofactor.

It localises to the cytoplasm. The enzyme catalyses UDP-N-acetyl-alpha-D-muramate + NADP(+) = UDP-N-acetyl-3-O-(1-carboxyvinyl)-alpha-D-glucosamine + NADPH + H(+). It functions in the pathway cell wall biogenesis; peptidoglycan biosynthesis. In terms of biological role, cell wall formation. This is UDP-N-acetylenolpyruvoylglucosamine reductase from Psychrobacter sp. (strain PRwf-1).